Here is a 429-residue protein sequence, read N- to C-terminus: Serine hydroxymethyltransferase (429 aa).

(6S)-5,6,7,8-tetrahydrofolate-binding positions include leucine 126 and 130–132 (GHL). The residue at position 235 (lysine 235) is an N6-(pyridoxal phosphate)lysine. A (6S)-5,6,7,8-tetrahydrofolate-binding site is contributed by 359–361 (SPF).

Belongs to the SHMT family. As to quaternary structure, homodimer. It depends on pyridoxal 5'-phosphate as a cofactor.

It localises to the cytoplasm. It carries out the reaction (6R)-5,10-methylene-5,6,7,8-tetrahydrofolate + glycine + H2O = (6S)-5,6,7,8-tetrahydrofolate + L-serine. It participates in one-carbon metabolism; tetrahydrofolate interconversion. It functions in the pathway amino-acid biosynthesis; glycine biosynthesis; glycine from L-serine: step 1/1. In terms of biological role, catalyzes the reversible interconversion of serine and glycine with tetrahydrofolate (THF) serving as the one-carbon carrier. This reaction serves as the major source of one-carbon groups required for the biosynthesis of purines, thymidylate, methionine, and other important biomolecules. Also exhibits THF-independent aldolase activity toward beta-hydroxyamino acids, producing glycine and aldehydes, via a retro-aldol mechanism. The polypeptide is Serine hydroxymethyltransferase (Parasynechococcus marenigrum (strain WH8102)).